A 307-amino-acid chain; its full sequence is Elongation factor Ts (307 aa).

Positions 80–83 (TDFV) are involved in Mg(2+) ion dislocation from EF-Tu.

Belongs to the EF-Ts family.

It is found in the cytoplasm. Functionally, associates with the EF-Tu.GDP complex and induces the exchange of GDP to GTP. It remains bound to the aminoacyl-tRNA.EF-Tu.GTP complex up to the GTP hydrolysis stage on the ribosome. The chain is Elongation factor Ts from Clostridium botulinum (strain Loch Maree / Type A3).